A 205-amino-acid chain; its full sequence is Holliday junction branch migration complex subunit RuvA (205 aa).

The segment at 1–64 (MIGKLKGLID…EDQIKLFGFR (64 aa)) is domain I. A domain II region spans residues 65–143 (SDLEREWFRL…AFASVDPAVV (79 aa)). A flexible linker region spans residues 144-153 (ALSGALDERS). The segment at 153 to 205 (SAPRPVTDAISALVNLGYGQPQAAAAIASASRSAGEGAETAQLIKLGLKELSK) is domain III.

Belongs to the RuvA family. Homotetramer. Forms an RuvA(8)-RuvB(12)-Holliday junction (HJ) complex. HJ DNA is sandwiched between 2 RuvA tetramers; dsDNA enters through RuvA and exits via RuvB. An RuvB hexamer assembles on each DNA strand where it exits the tetramer. Each RuvB hexamer is contacted by two RuvA subunits (via domain III) on 2 adjacent RuvB subunits; this complex drives branch migration. In the full resolvosome a probable DNA-RuvA(4)-RuvB(12)-RuvC(2) complex forms which resolves the HJ.

Its subcellular location is the cytoplasm. Its function is as follows. The RuvA-RuvB-RuvC complex processes Holliday junction (HJ) DNA during genetic recombination and DNA repair, while the RuvA-RuvB complex plays an important role in the rescue of blocked DNA replication forks via replication fork reversal (RFR). RuvA specifically binds to HJ cruciform DNA, conferring on it an open structure. The RuvB hexamer acts as an ATP-dependent pump, pulling dsDNA into and through the RuvAB complex. HJ branch migration allows RuvC to scan DNA until it finds its consensus sequence, where it cleaves and resolves the cruciform DNA. In Rhodopseudomonas palustris (strain BisB18), this protein is Holliday junction branch migration complex subunit RuvA.